Consider the following 297-residue polypeptide: N-acetylmuramic acid 6-phosphate etherase (297 aa).

In terms of domain architecture, SIS spans 55–218 (AAAALKAGGR…STGAMVKLGK (164 aa)). Catalysis depends on E83, which acts as the Proton donor. Residue E114 is part of the active site.

It belongs to the GCKR-like family. MurNAc-6-P etherase subfamily. As to quaternary structure, homodimer.

The enzyme catalyses N-acetyl-D-muramate 6-phosphate + H2O = N-acetyl-D-glucosamine 6-phosphate + (R)-lactate. Its pathway is amino-sugar metabolism; 1,6-anhydro-N-acetylmuramate degradation. It participates in amino-sugar metabolism; N-acetylmuramate degradation. The protein operates within cell wall biogenesis; peptidoglycan recycling. Functionally, specifically catalyzes the cleavage of the D-lactyl ether substituent of MurNAc 6-phosphate, producing GlcNAc 6-phosphate and D-lactate. Together with AnmK, is also required for the utilization of anhydro-N-acetylmuramic acid (anhMurNAc) either imported from the medium or derived from its own cell wall murein, and thus plays a role in cell wall recycling. The chain is N-acetylmuramic acid 6-phosphate etherase from Serratia proteamaculans (strain 568).